Here is a 522-residue protein sequence, read N- to C-terminus: Maturase K (522 aa).

It belongs to the intron maturase 2 family. MatK subfamily.

It is found in the plastid. The protein localises to the chloroplast. Usually encoded in the trnK tRNA gene intron. Probably assists in splicing its own and other chloroplast group II introns. This chain is Maturase K, found in Iris tenax (Oregon iris).